The sequence spans 116 residues: Large ribosomal subunit protein bL19 (116 aa).

Belongs to the bacterial ribosomal protein bL19 family.

In terms of biological role, this protein is located at the 30S-50S ribosomal subunit interface and may play a role in the structure and function of the aminoacyl-tRNA binding site. In Actinobacillus succinogenes (strain ATCC 55618 / DSM 22257 / CCUG 43843 / 130Z), this protein is Large ribosomal subunit protein bL19.